Consider the following 248-residue polypeptide: Transcription factor bHLH35 (248 aa).

Low complexity predominate over residues Ser-37–Ser-54. Residues Ser-37 to Glu-60 form a disordered region. Residues Ser-51–Leu-100 form the bHLH domain.

As to quaternary structure, homodimer. In terms of tissue distribution, expressed constitutively in roots, leaves, stems, and flowers.

It localises to the nucleus. The chain is Transcription factor bHLH35 (BHLH35) from Arabidopsis thaliana (Mouse-ear cress).